The chain runs to 911 residues: Valine--tRNA ligase (911 aa).

The 'HIGH' region motif lies at 57–67; it reads PTVSGSLHVGH. Positions 599–603 match the 'KMSKS' region motif; sequence KMSKS. ATP is bound at residue Lys-602. Residues 882–911 form a disordered region; it reads EESAAEDAPETEVAVEASELGEPPVKKPKH.

It belongs to the class-I aminoacyl-tRNA synthetase family. ValS type 2 subfamily. In terms of assembly, monomer.

It is found in the cytoplasm. The catalysed reaction is tRNA(Val) + L-valine + ATP = L-valyl-tRNA(Val) + AMP + diphosphate. Its function is as follows. Catalyzes the attachment of valine to tRNA(Val). As ValRS can inadvertently accommodate and process structurally similar amino acids such as threonine, to avoid such errors, it has a 'posttransfer' editing activity that hydrolyzes mischarged Thr-tRNA(Val) in a tRNA-dependent manner. In Bifidobacterium longum subsp. infantis (strain ATCC 15697 / DSM 20088 / JCM 1222 / NCTC 11817 / S12), this protein is Valine--tRNA ligase.